The sequence spans 1295 residues: Nonribosomal peptide synthetase resC (1295 aa).

The disordered stretch occupies residues 1-24 (MDLTTTSHARVDSGGVPFTSSLND). The tract at residues 221-624 (KDVVDASPQA…EGRKDTQIKL (404 aa)) is adenylation. Residues 759–836 (ESANPAEENL…DQANLLRPLV (78 aa)) enclose the Carrier domain. Ser-796 bears the O-(pantetheine 4'-phosphoryl)serine mark. The interval 873–1284 (EDVYPCTPYQ…DEYSQTLHEL (412 aa)) is condensation.

The protein belongs to the NRP synthetase family. Requires pantetheine 4'-phosphate as cofactor.

The enzyme catalyses restrictinol + glycine + H(+) = restricticin + H2O. The protein operates within antifungal biosynthesis. Functionally, nonribosomal peptide synthetase; part of the gene cluster that mediates the biosynthesis of the tetrahydropyranyl antifungal agent restricticin that acts as an inhibitor of CYP51 and blocks the ergosterol biosynthesis. Within the pathway, resC catalyzes the C3 esterification of restrictinol with glycine to yield restricticin. ResC represents an example of the emerging class of single-module NRPS-like enzymes that perform esterification reactions. The highly reducing polyketide synthase resH, the short chain dehydrogenase resG, the cyclase resF, the FAD-dependent monooxygenase resA and the enoylreductase resD are required to generate the first stable intermediate desmethylrestrictinol. ResH with resD biosynthesize the first polyketide chain intermediate that is reduced by resG, followed by epoxidation by resA before 6-endo cyclization via epoxide opening by resF leads to desmethylrestrictinol. The methyltransferase resE then catalyzes the C4 O-methylation of desmethylrestrictinol to produce restrictinol, and the nonribosomal peptide synthetase resC catalyzes the C3 esterification of restrictinol with glycine that leads to restricticin. The polypeptide is Nonribosomal peptide synthetase resC (Aspergillus sclerotiorum).